Here is a 216-residue protein sequence, read N- to C-terminus: ATP-dependent Clp protease proteolytic subunit (216 aa).

Ser120 functions as the Nucleophile in the catalytic mechanism. His145 is an active-site residue.

It belongs to the peptidase S14 family. As to quaternary structure, fourteen ClpP subunits assemble into 2 heptameric rings which stack back to back to give a disk-like structure with a central cavity, resembling the structure of eukaryotic proteasomes.

It is found in the cytoplasm. It catalyses the reaction Hydrolysis of proteins to small peptides in the presence of ATP and magnesium. alpha-casein is the usual test substrate. In the absence of ATP, only oligopeptides shorter than five residues are hydrolyzed (such as succinyl-Leu-Tyr-|-NHMec, and Leu-Tyr-Leu-|-Tyr-Trp, in which cleavage of the -Tyr-|-Leu- and -Tyr-|-Trp bonds also occurs).. Cleaves peptides in various proteins in a process that requires ATP hydrolysis. Has a chymotrypsin-like activity. Plays a major role in the degradation of misfolded proteins. In Cupriavidus metallidurans (strain ATCC 43123 / DSM 2839 / NBRC 102507 / CH34) (Ralstonia metallidurans), this protein is ATP-dependent Clp protease proteolytic subunit.